The following is a 143-amino-acid chain: Ribonuclease HI (143 aa).

The region spanning 1 to 136 (MQEIEIFCDG…CNSLAKLEAQ (136 aa)) is the RNase H type-1 domain. Asp-9, Glu-47, Asp-69, and Asn-128 together coordinate Mg(2+).

This sequence belongs to the RNase H family. As to quaternary structure, monomer. Mg(2+) serves as cofactor.

The protein resides in the cytoplasm. It catalyses the reaction Endonucleolytic cleavage to 5'-phosphomonoester.. Endonuclease that specifically degrades the RNA of RNA-DNA hybrids. The chain is Ribonuclease HI (rnhA) from Helicobacter pylori (strain J99 / ATCC 700824) (Campylobacter pylori J99).